Reading from the N-terminus, the 89-residue chain is Omega-theraphotoxin-Ba1c (89 aa).

An N-terminal signal peptide occupies residues 1–23 (MRSLTLAAVLACSLLLVFHTSAA). A propeptide spanning residues 24 to 50 (EEHEAQEGYLMNPGDTDTALATVDDER) is cleaved from the precursor. Intrachain disulfides connect cysteine 54-cysteine 75, cysteine 58-cysteine 81, and cysteine 67-cysteine 86.

Belongs to the neurotoxin 12 (Hwtx-2) family. 06 (TXP1) subfamily. Expressed by the venom gland.

The protein resides in the secreted. In terms of biological role, inhibits voltage-gated calcium channels (Cav) in rat cerebellar granule cells. Has insecticidal activity. The sequence is that of Omega-theraphotoxin-Ba1c from Brachypelma albiceps (Mexican golden redrump tarantula).